Here is a 276-residue protein sequence, read N- to C-terminus: Phosphonoacetaldehyde hydrolase (276 aa).

D19 functions as the Nucleophile in the catalytic mechanism. The Mg(2+) site is built by D19 and A21. K60 acts as the Schiff-base intermediate with substrate in catalysis. D193 contacts Mg(2+).

It belongs to the HAD-like hydrolase superfamily. PhnX family. Homodimer. Mg(2+) serves as cofactor.

The enzyme catalyses phosphonoacetaldehyde + H2O = acetaldehyde + phosphate + H(+). Involved in phosphonate degradation. This is Phosphonoacetaldehyde hydrolase from Bordetella bronchiseptica (strain ATCC BAA-588 / NCTC 13252 / RB50) (Alcaligenes bronchisepticus).